The primary structure comprises 520 residues: Amine oxidase [flavin-containing] B (520 aa).

At S2 the chain carries N-acetylserine. Residues 2-489 (SSKCDVVVVG…TFLQRHLPSV (488 aa)) are Cytoplasmic-facing. Position 52 is an N6-acetyllysine (K52). The residue at position 397 (C397) is an S-8alpha-FAD cysteine. A helical; Anchor for type IV membrane protein transmembrane segment spans residues 490 to 516 (PGLLKLIGLTTIFSATALGFLAHKRGL). At 517–520 (LVRI) the chain is on the mitochondrial intermembrane side.

As to quaternary structure, monomer, homo- or heterodimer (containing two subunits of similar size). Each subunit contains a covalently bound flavin. Enzymatically active as monomer. The cofactor is FAD.

The protein resides in the mitochondrion outer membrane. It catalyses the reaction a secondary aliphatic amine + O2 + H2O = a primary amine + an aldehyde + H2O2. The enzyme catalyses a primary methyl amine + O2 + H2O = an aldehyde + H2O2 + NH4(+). It carries out the reaction benzylamine + O2 + H2O = benzaldehyde + H2O2 + NH4(+). The catalysed reaction is (R)-adrenaline + O2 + H2O = (R)-3,4-dihydroxymandelaldehyde + methylamine + H2O2. It catalyses the reaction dopamine + O2 + H2O = 3,4-dihydroxyphenylacetaldehyde + H2O2 + NH4(+). The enzyme catalyses tyramine + O2 + H2O = (4-hydroxyphenyl)acetaldehyde + H2O2 + NH4(+). It carries out the reaction (R)-noradrenaline + O2 + H2O = (R)-3,4-dihydroxymandelaldehyde + H2O2 + NH4(+). The catalysed reaction is 2-phenylethylamine + O2 + H2O = 2-phenylacetaldehyde + H2O2 + NH4(+). It catalyses the reaction N-acetylputrescine + O2 + H2O = 4-acetamidobutanal + H2O2 + NH4(+). Functionally, catalyzes the oxidative deamination of primary and some secondary amines such as neurotransmitters, and exogenous amines including the tertiary amine, neurotoxin 1-methyl-4-phenyl-1,2,3,6-tetrahydropyridine (MPTP), with concomitant reduction of oxygen to hydrogen peroxide and participates in the metabolism of neuroactive and vasoactive amines in the central nervous system and peripheral tissues. Preferentially degrades benzylamine and phenylethylamine. The sequence is that of Amine oxidase [flavin-containing] B from Bos taurus (Bovine).